Here is a 946-residue protein sequence, read N- to C-terminus: Isoleucine--tRNA ligase (946 aa).

A 'HIGH' region motif is present at residues 58–68 (PYANGSIHIGH). Glutamate 568 is an L-isoleucyl-5'-AMP binding site. Residues 609–613 (KMSKS) carry the 'KMSKS' region motif. Lysine 612 lines the ATP pocket. Positions 908, 911, 928, and 931 each coordinate Zn(2+).

The protein belongs to the class-I aminoacyl-tRNA synthetase family. IleS type 1 subfamily. As to quaternary structure, monomer. The cofactor is Zn(2+).

The protein localises to the cytoplasm. It catalyses the reaction tRNA(Ile) + L-isoleucine + ATP = L-isoleucyl-tRNA(Ile) + AMP + diphosphate. Catalyzes the attachment of isoleucine to tRNA(Ile). As IleRS can inadvertently accommodate and process structurally similar amino acids such as valine, to avoid such errors it has two additional distinct tRNA(Ile)-dependent editing activities. One activity is designated as 'pretransfer' editing and involves the hydrolysis of activated Val-AMP. The other activity is designated 'posttransfer' editing and involves deacylation of mischarged Val-tRNA(Ile). This chain is Isoleucine--tRNA ligase, found in Chromohalobacter salexigens (strain ATCC BAA-138 / DSM 3043 / CIP 106854 / NCIMB 13768 / 1H11).